Reading from the N-terminus, the 943-residue chain is Isoleucine--tRNA ligase (943 aa).

The 'HIGH' region signature appears at 58-68 (PYANGSIHIGH). L-isoleucyl-5'-AMP is bound at residue Glu-567. The short motif at 608–612 (KMSKS) is the 'KMSKS' region element. An ATP-binding site is contributed by Lys-611. Positions 906, 909, 926, and 929 each coordinate Zn(2+).

Belongs to the class-I aminoacyl-tRNA synthetase family. IleS type 1 subfamily. In terms of assembly, monomer. Zn(2+) is required as a cofactor.

The protein resides in the cytoplasm. The enzyme catalyses tRNA(Ile) + L-isoleucine + ATP = L-isoleucyl-tRNA(Ile) + AMP + diphosphate. Functionally, catalyzes the attachment of isoleucine to tRNA(Ile). As IleRS can inadvertently accommodate and process structurally similar amino acids such as valine, to avoid such errors it has two additional distinct tRNA(Ile)-dependent editing activities. One activity is designated as 'pretransfer' editing and involves the hydrolysis of activated Val-AMP. The other activity is designated 'posttransfer' editing and involves deacylation of mischarged Val-tRNA(Ile). The protein is Isoleucine--tRNA ligase of Pseudomonas aeruginosa (strain ATCC 15692 / DSM 22644 / CIP 104116 / JCM 14847 / LMG 12228 / 1C / PRS 101 / PAO1).